A 134-amino-acid chain; its full sequence is ATP synthase epsilon chain (134 aa).

It belongs to the ATPase epsilon chain family. As to quaternary structure, F-type ATPases have 2 components, CF(1) - the catalytic core - and CF(0) - the membrane proton channel. CF(1) has five subunits: alpha(3), beta(3), gamma(1), delta(1), epsilon(1). CF(0) has three main subunits: a, b and c.

The protein resides in the cell inner membrane. Its function is as follows. Produces ATP from ADP in the presence of a proton gradient across the membrane. This chain is ATP synthase epsilon chain, found in Syntrophobacter fumaroxidans (strain DSM 10017 / MPOB).